Consider the following 642-residue polypeptide: Eukaryotic translation initiation factor 2A (642 aa).

WD repeat units lie at residues Met-69 to Cys-115, Thr-186 to Lys-224, Leu-289 to Pro-331, and Phe-374 to Lys-419. Residues Ile-485 to Ile-593 are disordered. 2 stretches are compositionally biased toward low complexity: residues Ala-493–Ala-507 and Thr-563–Asn-583. Ser-564, Ser-567, and Ser-572 each carry phosphoserine.

Belongs to the WD repeat EIF2A family. In terms of processing, ubiquitinated, probably leading to its degradation. May explain why it has a short half-life of 17 minutes.

Its function is as follows. Functions in the early steps of protein synthesis of a small number of specific mRNAs. Acts by directing the binding of methionyl-tRNAi to 40S ribosomal subunits. In contrast to the eIF-2 complex, it binds methionyl-tRNAi to 40S subunits in a codon-dependent manner, whereas the eIF-2 complex binds methionyl-tRNAi to 40S subunits in a GTP-dependent manner. Specifically associates with both 40S subunits and 80S ribosomes. In Saccharomyces cerevisiae (strain ATCC 204508 / S288c) (Baker's yeast), this protein is Eukaryotic translation initiation factor 2A.